Reading from the N-terminus, the 311-residue chain is Methionyl-tRNA formyltransferase (311 aa).

112–115 serves as a coordination point for (6S)-5,6,7,8-tetrahydrofolate; that stretch reads SLLP.

Belongs to the Fmt family.

It catalyses the reaction L-methionyl-tRNA(fMet) + (6R)-10-formyltetrahydrofolate = N-formyl-L-methionyl-tRNA(fMet) + (6S)-5,6,7,8-tetrahydrofolate + H(+). Attaches a formyl group to the free amino group of methionyl-tRNA(fMet). The formyl group appears to play a dual role in the initiator identity of N-formylmethionyl-tRNA by promoting its recognition by IF2 and preventing the misappropriation of this tRNA by the elongation apparatus. The protein is Methionyl-tRNA formyltransferase of Bradyrhizobium sp. (strain ORS 278).